Here is a 257-residue protein sequence, read N- to C-terminus: 3-dehydroquinate dehydratase (257 aa).

Residues 50 to 52 (EWR) and Arg86 each bind 3-dehydroquinate. The active-site Proton donor/acceptor is His147. The Schiff-base intermediate with substrate role is filled by Lys174. Residues Arg216, Ser235, and Gln239 each contribute to the 3-dehydroquinate site.

Belongs to the type-I 3-dehydroquinase family. As to quaternary structure, homodimer.

The catalysed reaction is 3-dehydroquinate = 3-dehydroshikimate + H2O. It functions in the pathway metabolic intermediate biosynthesis; chorismate biosynthesis; chorismate from D-erythrose 4-phosphate and phosphoenolpyruvate: step 3/7. Functionally, involved in the third step of the chorismate pathway, which leads to the biosynthesis of aromatic amino acids. Catalyzes the cis-dehydration of 3-dehydroquinate (DHQ) and introduces the first double bond of the aromatic ring to yield 3-dehydroshikimate. In Geobacillus thermodenitrificans (strain NG80-2), this protein is 3-dehydroquinate dehydratase.